A 252-amino-acid chain; its full sequence is Glucosamine-6-phosphate deaminase (252 aa).

Aspartate 67 functions as the Proton acceptor; for enolization step in the catalytic mechanism. Asparagine 137 functions as the For ring-opening step in the catalytic mechanism. The active-site Proton acceptor; for ring-opening step is histidine 139. Glutamate 144 (for ring-opening step) is an active-site residue.

The protein belongs to the glucosamine/galactosamine-6-phosphate isomerase family. NagB subfamily.

The enzyme catalyses alpha-D-glucosamine 6-phosphate + H2O = beta-D-fructose 6-phosphate + NH4(+). The protein operates within amino-sugar metabolism; N-acetylneuraminate degradation; D-fructose 6-phosphate from N-acetylneuraminate: step 5/5. Catalyzes the reversible isomerization-deamination of glucosamine 6-phosphate (GlcN6P) to form fructose 6-phosphate (Fru6P) and ammonium ion. In Staphylococcus aureus (strain MRSA252), this protein is Glucosamine-6-phosphate deaminase.